The chain runs to 163 residues: ATP synthase subunit b' (163 aa).

Residues 28–45 traverse the membrane as a helical segment; the sequence is LMAIQFLLLALILNATLY.

It belongs to the ATPase B chain family. In terms of assembly, F-type ATPases have 2 components, F(1) - the catalytic core - and F(0) - the membrane proton channel. F(1) has five subunits: alpha(3), beta(3), gamma(1), delta(1), epsilon(1). F(0) has four main subunits: a(1), b(1), b'(1) and c(10-14). The alpha and beta chains form an alternating ring which encloses part of the gamma chain. F(1) is attached to F(0) by a central stalk formed by the gamma and epsilon chains, while a peripheral stalk is formed by the delta, b and b' chains.

It is found in the cellular thylakoid membrane. Its function is as follows. F(1)F(0) ATP synthase produces ATP from ADP in the presence of a proton or sodium gradient. F-type ATPases consist of two structural domains, F(1) containing the extramembraneous catalytic core and F(0) containing the membrane proton channel, linked together by a central stalk and a peripheral stalk. During catalysis, ATP synthesis in the catalytic domain of F(1) is coupled via a rotary mechanism of the central stalk subunits to proton translocation. In terms of biological role, component of the F(0) channel, it forms part of the peripheral stalk, linking F(1) to F(0). The b'-subunit is a diverged and duplicated form of b found in plants and photosynthetic bacteria. This chain is ATP synthase subunit b', found in Nostoc sp. (strain PCC 7120 / SAG 25.82 / UTEX 2576).